The sequence spans 172 residues: Transcriptional repressor NrdR (172 aa).

A zinc finger lies at 3–34; sequence CPFCGAPDTRVIDSRLAGEGDQVRRRRECLSC. An ATP-cone domain is found at 49–139; that stretch reads PRVVKRDGSR…VYLSFADVQA (91 aa).

The protein belongs to the NrdR family. The cofactor is Zn(2+).

Negatively regulates transcription of bacterial ribonucleotide reductase nrd genes and operons by binding to NrdR-boxes. The protein is Transcriptional repressor NrdR of Thioalkalivibrio sulfidiphilus (strain HL-EbGR7).